The following is a 920-amino-acid chain: Bifunctional aspartokinase/homoserine dehydrogenase 1, chloroplastic (920 aa).

The tract at residues 1 to 21 (MRSLTVASRHPGAAFSTRRRP) is disordered. The transit peptide at 1–92 (MRSLTVASRH…EAIADLPKGD (92 aa)) directs the protein to the chloroplast. The interval 93–341 (MWSVHKFGGT…VSEAVILSTL (249 aa)) is aspartokinase. The tract at residues 342 to 566 (SYQEAWEMSY…LSKTTLAVGI (225 aa)) is interface. 2 ACT domains span residues 416-491 (VEGT…VIHN) and 497-574 (TVGL…LIGR). Residues 567–920 (IGPGLIGRTL…RLSSYLGAPS (354 aa)) are homoserine dehydrogenase. The NAD(+) site is built by isoleucine 572 and alanine 601. Isoleucine 572 is an NADP(+) binding site. Position 572 (isoleucine 572) interacts with NADPH. Arginine 604, threonine 653, and lysine 677 together coordinate NADP(+). Position 653 (threonine 653) interacts with NAD(+). NADPH-binding residues include threonine 653 and lysine 677. Residues glutamate 704, valine 707, alanine 709, and leucine 711 each coordinate Na(+). Residues glycine 762 and glutamate 765 each contribute to the NADP(+) site. Glutamate 765 and aspartate 776 together coordinate L-homoserine. Catalysis depends on lysine 780, which acts as the Proton donor. NAD(+) is bound at residue glycine 897. Glycine 897 serves as a coordination point for NADP(+). Glycine 897 is an NADPH binding site.

It in the N-terminal section; belongs to the aspartokinase family. In the C-terminal section; belongs to the homoserine dehydrogenase family. In terms of assembly, homo- or heterodimer. Requires a metal cation as cofactor.

The protein resides in the plastid. It is found in the chloroplast. The enzyme catalyses L-homoserine + NADP(+) = L-aspartate 4-semialdehyde + NADPH + H(+). It carries out the reaction L-homoserine + NAD(+) = L-aspartate 4-semialdehyde + NADH + H(+). It catalyses the reaction L-aspartate + ATP = 4-phospho-L-aspartate + ADP. It functions in the pathway amino-acid biosynthesis; L-lysine biosynthesis via DAP pathway; (S)-tetrahydrodipicolinate from L-aspartate: step 1/4. The protein operates within amino-acid biosynthesis; L-methionine biosynthesis via de novo pathway; L-homoserine from L-aspartate: step 1/3. Its pathway is amino-acid biosynthesis; L-methionine biosynthesis via de novo pathway; L-homoserine from L-aspartate: step 3/3. It participates in amino-acid biosynthesis; L-threonine biosynthesis; L-threonine from L-aspartate: step 1/5. It functions in the pathway amino-acid biosynthesis; L-threonine biosynthesis; L-threonine from L-aspartate: step 3/5. In terms of biological role, bifunctional aspartate kinase and homoserine dehydrogenase that catalyzes the first and the third steps toward the synthesis of lysine, methionine and threonine from aspartate. This chain is Bifunctional aspartokinase/homoserine dehydrogenase 1, chloroplastic (AKHSDH1), found in Zea mays (Maize).